A 227-amino-acid chain; its full sequence is AN1-type zinc finger protein 3 (227 aa).

The segment at 12 to 44 (PSLPPRCPCGFWGSSKTMNLCSKCFADFQKKQP) adopts an A20-type zinc-finger fold. Zn(2+)-binding residues include Cys18, Cys20, Cys32, and Cys35. 2 disordered regions span residues 41–99 (KKQP…TEEC) and 113–151 (PTKR…RSKQ). Low complexity-rich tracts occupy residues 49–59 (TPSTSNSQSDL) and 66–77 (SDNNNTSVTTPT). Composition is skewed to polar residues over residues 78–96 (LSPS…SPST) and 113–127 (PTKR…SENE). The span at 135–148 (RLVENPERPEESGR) shows a compositional bias: basic and acidic residues. The AN1-type zinc-finger motif lies at 151–200 (QKSRRRCFQCQTKLELVQQELGSCRCGYVFCMLHRLPEQHDCTFDHMGRG). Zn(2+) contacts are provided by Cys157, Cys160, Cys174, Cys176, Cys181, His184, His190, and Cys192.

As to expression, expressed in testis.

This chain is AN1-type zinc finger protein 3 (Zfand3), found in Mus musculus (Mouse).